The following is a 229-amino-acid chain: Peptidase E (229 aa).

Catalysis depends on charge relay system residues S120, D135, and H157.

It belongs to the peptidase S51 family.

The protein resides in the cytoplasm. It carries out the reaction Dipeptidase E catalyzes the hydrolysis of dipeptides Asp-|-Xaa. It does not act on peptides with N-terminal Glu, Asn or Gln, nor does it cleave isoaspartyl peptides.. Hydrolyzes dipeptides containing N-terminal aspartate residues. May play a role in allowing the cell to use peptide aspartate to spare carbon otherwise required for the synthesis of the aspartate family of amino acids. This chain is Peptidase E, found in Salmonella arizonae (strain ATCC BAA-731 / CDC346-86 / RSK2980).